A 279-amino-acid chain; its full sequence is Phosphate import ATP-binding protein PstB 2 (279 aa).

In terms of domain architecture, ABC transporter spans 34–274 (FDIENLDLYY…PSDDRTRGYV (241 aa)). 66-73 (GPSGCGKS) is an ATP binding site.

The protein belongs to the ABC transporter superfamily. Phosphate importer (TC 3.A.1.7) family. In terms of assembly, the complex is composed of two ATP-binding proteins (PstB), two transmembrane proteins (PstC and PstA) and a solute-binding protein (PstS).

Its subcellular location is the cell inner membrane. It catalyses the reaction phosphate(out) + ATP + H2O = ADP + 2 phosphate(in) + H(+). In terms of biological role, part of the ABC transporter complex PstSACB involved in phosphate import. Responsible for energy coupling to the transport system. The chain is Phosphate import ATP-binding protein PstB 2 from Vibrio vulnificus (strain YJ016).